Here is a 72-residue protein sequence, read N- to C-terminus: Cytochrome b-c1 complex subunit 8 (72 aa).

At 2-41 (GKQPVKLKAVVYAISPFQQKIMPGLWKDLPGKIHHKVSEN) the chain is on the mitochondrial matrix side. The chain crosses the membrane as a helical span at residues 42–59 (WISATLLLGPLVGTYSYV). The Mitochondrial intermembrane portion of the chain corresponds to 60–72 (QHFLEKEKLEHRY).

This sequence belongs to the UQCRQ/QCR8 family. As to quaternary structure, component of the ubiquinol-cytochrome c oxidoreductase (cytochrome b-c1 complex, complex III, CIII), a multisubunit enzyme composed of 3 respiratory subunits cytochrome b, cytochrome c1 and Rieske protein, 2 core protein subunits, and additional low-molecular weight protein subunits. The complex exists as an obligatory dimer and forms supercomplexes (SCs) in the inner mitochondrial membrane with cytochrome c oxidase (complex IV, CIV).

It is found in the mitochondrion inner membrane. Functionally, component of the ubiquinol-cytochrome c oxidoreductase, a multisubunit transmembrane complex that is part of the mitochondrial electron transport chain which drives oxidative phosphorylation. The respiratory chain contains 3 multisubunit complexes succinate dehydrogenase (complex II, CII), ubiquinol-cytochrome c oxidoreductase (cytochrome b-c1 complex, complex III, CIII) and cytochrome c oxidase (complex IV, CIV), that cooperate to transfer electrons derived from NADH and succinate to molecular oxygen, creating an electrochemical gradient over the inner membrane that drives transmembrane transport and the ATP synthase. The cytochrome b-c1 complex catalyzes electron transfer from ubiquinol to cytochrome c, linking this redox reaction to translocation of protons across the mitochondrial inner membrane, with protons being carried across the membrane as hydrogens on the quinol. In the process called Q cycle, 2 protons are consumed from the matrix, 4 protons are released into the intermembrane space and 2 electrons are passed to cytochrome c. The chain is Cytochrome b-c1 complex subunit 8 from Solanum tuberosum (Potato).